Reading from the N-terminus, the 171-residue chain is Dual-action ribosomal maturation protein DarP (171 aa).

Residues 1 to 30 (MPKRPAENPEQSDDFVSKSQKKREMAERQE) form a disordered region.

It belongs to the DarP family.

Its subcellular location is the cytoplasm. In terms of biological role, member of a network of 50S ribosomal subunit biogenesis factors which assembles along the 30S-50S interface, preventing incorrect 23S rRNA structures from forming. Promotes peptidyl transferase center (PTC) maturation. The chain is Dual-action ribosomal maturation protein DarP from Idiomarina loihiensis (strain ATCC BAA-735 / DSM 15497 / L2-TR).